We begin with the raw amino-acid sequence, 885 residues long: Cytosolic carboxypeptidase-like protein 5 (885 aa).

The Peptidase M14 domain occupies 157–570 (YPFSYSDCQD…AMAIAALDMA (414 aa)). Histidine 252 and glutamate 255 together coordinate Zn(2+). Residues 343–402 (NSQSPSEHQHSSHLPPDAPLSDPEKADSLQNRAHLGRSSSGDKPEAWTQTEVAEQKPNSV) form a disordered region. Over residues 388–402 (AWTQTEVAEQKPNSV) the composition is skewed to polar residues. Histidine 434 contacts Zn(2+). Glutamate 516 acts as the Proton donor/acceptor in catalysis. 2 disordered regions span residues 605–733 (TTVN…LASS) and 783–839 (RLQA…PRPC). Residues 620–640 (PPRSNNGLPVSCSENTLSRAR) are compositionally biased toward polar residues. 2 stretches are compositionally biased toward low complexity: residues 641–666 (SFSTGTSAGGSSSSQQNSPQMKNSPS) and 714–733 (PTSSSLAPSPTPASSNLASS). Serine 840 carries the post-translational modification Phosphoserine.

The protein belongs to the peptidase M14 family. The cofactor is Zn(2+).

Its subcellular location is the cytoplasm. The protein localises to the cytosol. It is found in the nucleus. It localises to the cytoskeleton. The protein resides in the spindle. Its subcellular location is the midbody. It carries out the reaction gamma-L-glutamyl-L-glutamyl-[protein] + H2O = L-glutamyl-[protein] + L-glutamate. The catalysed reaction is (L-glutamyl)(n+1)-gamma-L-glutamyl-L-glutamyl-[protein] + H2O = (L-glutamyl)(n)-gamma-L-glutamyl-L-glutamyl-[protein] + L-glutamate. It catalyses the reaction C-terminal L-alpha-aminoacyl-L-glutamyl-[tubulin] + H2O = C-terminal L-alpha-aminoacyl-[tubulin] + L-glutamate. The enzyme catalyses C-terminal L-alpha-aminoacyl-L-glutamyl-L-glutamyl-[tubulin] + H2O = C-terminal L-alpha-aminoacyl-L-glutamyl-[tubulin] + L-glutamate. Metallocarboxypeptidase that mediates deglutamylation of tubulin and non-tubulin target proteins. Catalyzes the removal of polyglutamate side chains present on the gamma-carboxyl group of glutamate residues within the C-terminal tail of alpha- and beta-tubulin. Cleaves alpha- and gamma-linked polyglutamate tubulin side-chain, as well as the branching point glutamate. Also catalyzes the removal of alpha-linked glutamate residues from the carboxy-terminus of alpha-tubulin. Mediates deglutamylation of nucleotidyltransferase CGAS, leading to CGAS antiviral defense response activation. The protein is Cytosolic carboxypeptidase-like protein 5 (AGBL5) of Bos taurus (Bovine).